Reading from the N-terminus, the 1106-residue chain is Carbamoyl phosphate synthase large chain (1106 aa).

The segment at 1 to 402 (MPKREDLKSV…ALQKALRSLE (402 aa)) is carboxyphosphate synthetic domain. ATP contacts are provided by R129, R169, G175, G176, E208, I210, E215, G241, V242, H243, Q285, and E299. The 196-residue stretch at 133–328 (KGVVERCGAE…IAKIATKLSL (196 aa)) folds into the ATP-grasp 1 domain. Q285, E299, and N301 together coordinate Mg(2+). The Mn(2+) site is built by Q285, E299, and N301. The segment at 403-546 (QKGSQLDFGS…YHYSSYDQED (144 aa)) is oligomerization domain. The carbamoyl phosphate synthetic domain stretch occupies residues 547–956 (EIALHEKPSV…AFAKSQAAAN (410 aa)). One can recognise an ATP-grasp 2 domain in the interval 677-868 (ARVLDIAGLI…LAKAAALIGT (192 aa)). Positions 713, 752, 754, 759, 784, 785, 786, 787, 827, and 839 each coordinate ATP. Mg(2+) contacts are provided by Q827, E839, and N841. Q827, E839, and N841 together coordinate Mn(2+). The MGS-like domain occupies 957–1106 (NALPTEGKVF…EALLEAAANV (150 aa)). The interval 957–1106 (NALPTEGKVF…EALLEAAANV (150 aa)) is allosteric domain.

This sequence belongs to the CarB family. Composed of two chains; the small (or glutamine) chain promotes the hydrolysis of glutamine to ammonia, which is used by the large (or ammonia) chain to synthesize carbamoyl phosphate. Tetramer of heterodimers (alpha,beta)4. It depends on Mg(2+) as a cofactor. Mn(2+) serves as cofactor.

The catalysed reaction is hydrogencarbonate + L-glutamine + 2 ATP + H2O = carbamoyl phosphate + L-glutamate + 2 ADP + phosphate + 2 H(+). It carries out the reaction hydrogencarbonate + NH4(+) + 2 ATP = carbamoyl phosphate + 2 ADP + phosphate + 2 H(+). It functions in the pathway amino-acid biosynthesis; L-arginine biosynthesis; carbamoyl phosphate from bicarbonate: step 1/1. Its pathway is pyrimidine metabolism; UMP biosynthesis via de novo pathway; (S)-dihydroorotate from bicarbonate: step 1/3. Large subunit of the glutamine-dependent carbamoyl phosphate synthetase (CPSase). CPSase catalyzes the formation of carbamoyl phosphate from the ammonia moiety of glutamine, carbonate, and phosphate donated by ATP, constituting the first step of 2 biosynthetic pathways, one leading to arginine and/or urea and the other to pyrimidine nucleotides. The large subunit (synthetase) binds the substrates ammonia (free or transferred from glutamine from the small subunit), hydrogencarbonate and ATP and carries out an ATP-coupled ligase reaction, activating hydrogencarbonate by forming carboxy phosphate which reacts with ammonia to form carbamoyl phosphate. The polypeptide is Carbamoyl phosphate synthase large chain (Renibacterium salmoninarum (strain ATCC 33209 / DSM 20767 / JCM 11484 / NBRC 15589 / NCIMB 2235)).